Consider the following 176-residue polypeptide: Large ribosomal subunit protein uL10 (176 aa).

The protein belongs to the universal ribosomal protein uL10 family. Part of the ribosomal stalk of the 50S ribosomal subunit. The N-terminus interacts with L11 and the large rRNA to form the base of the stalk. The C-terminus forms an elongated spine to which L12 dimers bind in a sequential fashion forming a multimeric L10(L12)X complex.

Functionally, forms part of the ribosomal stalk, playing a central role in the interaction of the ribosome with GTP-bound translation factors. This is Large ribosomal subunit protein uL10 from Carboxydothermus hydrogenoformans (strain ATCC BAA-161 / DSM 6008 / Z-2901).